The primary structure comprises 310 residues: Beta-ketoacyl-[acyl-carrier-protein] synthase III (310 aa).

Residues Cys116 and His239 contribute to the active site. Residues Gln240–Arg244 are ACP-binding. The active site involves Asn269.

It belongs to the thiolase-like superfamily. FabH family. As to quaternary structure, homodimer.

The protein localises to the cytoplasm. It catalyses the reaction malonyl-[ACP] + acetyl-CoA + H(+) = 3-oxobutanoyl-[ACP] + CO2 + CoA. Its pathway is lipid metabolism; fatty acid biosynthesis. Functionally, catalyzes the condensation reaction of fatty acid synthesis by the addition to an acyl acceptor of two carbons from malonyl-ACP. Catalyzes the first condensation reaction which initiates fatty acid synthesis and may therefore play a role in governing the total rate of fatty acid production. Possesses both acetoacetyl-ACP synthase and acetyl transacylase activities. Its substrate specificity determines the biosynthesis of branched-chain and/or straight-chain of fatty acids. In Acholeplasma laidlawii (strain PG-8A), this protein is Beta-ketoacyl-[acyl-carrier-protein] synthase III.